We begin with the raw amino-acid sequence, 183 residues long: uncharacterized protein (183 aa).

A signal peptide spans 1 to 29 (MQCWQQPFLRFLQQPFFLATASLAGSSSS). The tract at residues 149-183 (PGSTCDGSLKGRAYPSCVPKRDPEHSREESHPLSG) is disordered. Positions 167–183 (PKRDPEHSREESHPLSG) are enriched in basic and acidic residues.

The protein resides in the secreted. This is an uncharacterized protein from Homo sapiens (Human).